We begin with the raw amino-acid sequence, 131 residues long: Ribonuclease VapC13 (131 aa).

Residues I2 to K128 enclose the PINc domain. Mg(2+) contacts are provided by D5 and D99.

It belongs to the PINc/VapC protein family. Mg(2+) serves as cofactor.

It is found in the secreted. Toxic component of a type II toxin-antitoxin (TA) system. An RNase. The cognate antitoxin is VapB13. The chain is Ribonuclease VapC13 from Mycobacterium tuberculosis (strain ATCC 25618 / H37Rv).